Consider the following 230-residue polypeptide: uncharacterized protein (230 aa).

An NADP(+)-binding site is contributed by 10–34 (VVTGASSGIGEAIAKKLSQQGASIV). Ser-139 is a substrate binding site. Tyr-152 acts as the Proton acceptor in catalysis.

Belongs to the short-chain dehydrogenases/reductases (SDR) family.

This is an uncharacterized protein from Staphylococcus epidermidis (strain ATCC 12228 / FDA PCI 1200).